Consider the following 397-residue polypeptide: Elongation factor Tu (397 aa).

The tr-type G domain occupies 10 to 207 (KPHVNIGTIG…ACDSYIPEPE (198 aa)). Residues 19–26 (GHIDHGKT) are G1. Residue 19 to 26 (GHIDHGKT) participates in GTP binding. Residue Thr26 coordinates Mg(2+). The tract at residues 60–64 (GITIA) is G2. The interval 81-84 (DCPG) is G3. GTP contacts are provided by residues 81-85 (DCPGH) and 136-139 (NKCD). Residues 136-139 (NKCD) are G4. The tract at residues 174–176 (SAL) is G5.

It belongs to the TRAFAC class translation factor GTPase superfamily. Classic translation factor GTPase family. EF-Tu/EF-1A subfamily. In terms of assembly, monomer.

It is found in the cytoplasm. The catalysed reaction is GTP + H2O = GDP + phosphate + H(+). Functionally, GTP hydrolase that promotes the GTP-dependent binding of aminoacyl-tRNA to the A-site of ribosomes during protein biosynthesis. The sequence is that of Elongation factor Tu from Oleidesulfovibrio alaskensis (strain ATCC BAA-1058 / DSM 17464 / G20) (Desulfovibrio alaskensis).